A 287-amino-acid polypeptide reads, in one-letter code: Festuclavine synthase I (287 aa).

Belongs to the fgaFS/easG family.

The catalysed reaction is festuclavine + NAD(+) = 6,8-dimethyl-6,7-didehydroergoline + NADH + H(+). Its pathway is alkaloid biosynthesis; ergot alkaloid biosynthesis. Festuclavine synthase; part of the gene cluster that mediates the biosynthesis of isofumigaclavines, fungal ergot alkaloids. The tryptophan dimethylallyltransferase ifgA catalyzes the first step of ergot alkaloid biosynthesis by condensing dimethylallyl diphosphate (DMAP) and tryptophan to form 4-dimethylallyl-L-tryptophan. The second step is catalyzed by the methyltransferase ifgB that methylates 4-dimethylallyl-L-tryptophan in the presence of S-adenosyl-L-methionine, resulting in the formation of N-methyl-dimethylallyl-L-tryptophan. The catalase ifgD and the FAD-dependent oxidoreductase ifgC then transform N-methyl-dimethylallyl-L-tryptophan to chanoclavine-I which is further oxidized by ifgE in the presence of NAD(+), resulting in the formation of chanoclavine-I aldehyde. The chanoclavine-I aldehyde reductases ifgG and/or fgaOx3 reduce chanoclavine-I aldehyde to dihydrochanoclavine-I aldehyde that spontaneously dehydrates to form 6,8-dimethyl-6,7-didehydroergoline. The festuclavine dehydrogenases ifgF1 and/or ifgF2 then catalyze the reduction of 6,8-dimethyl-6,7-didehydroergoline to form festuclavine. Hydrolysis of festuclavine by a yet undetermined cytochrome P450 monooxygenase (called ifgH) then leads to the formation of isofumigaclavine B which is in turn acetylated by ifgI to isofumigaclavine A. Penicillium roqueforti has interestingly at least two sets of genes for the consumption of chanoclavine-I aldehyde on three different loci, the OYEs ifgG/fgaOx3 and the festuclavine synthase homologs ifgF1/ifgF2. The reason for the duplication of these genes is unclear, probably to ensure the conversion of chanoclavine-I aldehyde by differential gene expression under various environmental conditions. In Penicillium roqueforti (strain FM164), this protein is Festuclavine synthase I.